A 296-amino-acid chain; its full sequence is Polyamine aminopropyltransferase (296 aa).

Residues 16 to 251 (HLWYFEYYTG…GMWSYTFASK (236 aa)) form the PABS domain. Q46 contacts S-methyl-5'-thioadenosine. Positions 77 and 101 each coordinate spermidine. Residues E121 and 152–153 (NG) each bind S-methyl-5'-thioadenosine. D170 (proton acceptor) is an active-site residue. 170–173 (DSTD) provides a ligand contact to spermidine.

This sequence belongs to the spermidine/spermine synthase family. In terms of assembly, homodimer or homotetramer.

The protein localises to the cytoplasm. It carries out the reaction S-adenosyl 3-(methylsulfanyl)propylamine + putrescine = S-methyl-5'-thioadenosine + spermidine + H(+). The protein operates within amine and polyamine biosynthesis; spermidine biosynthesis; spermidine from putrescine: step 1/1. Functionally, catalyzes the irreversible transfer of a propylamine group from the amino donor S-adenosylmethioninamine (decarboxy-AdoMet) to putrescine (1,4-diaminobutane) to yield spermidine. In Thermotoga petrophila (strain ATCC BAA-488 / DSM 13995 / JCM 10881 / RKU-1), this protein is Polyamine aminopropyltransferase.